Consider the following 373-residue polypeptide: Queuine tRNA-ribosyltransferase (373 aa).

Aspartate 90 functions as the Proton acceptor in the catalytic mechanism. Residues 90-94 (DSGGF), aspartate 144, glutamine 193, and glycine 220 each bind substrate. Residues 251-257 (GVGTPED) form an RNA binding region. Aspartate 270 serves as the catalytic Nucleophile. The interval 275-279 (TRNAR) is RNA binding; important for wobble base 34 recognition. Residues cysteine 308, cysteine 310, cysteine 313, and histidine 339 each contribute to the Zn(2+) site.

Belongs to the queuine tRNA-ribosyltransferase family. In terms of assembly, homodimer. Within each dimer, one monomer is responsible for RNA recognition and catalysis, while the other monomer binds to the replacement base PreQ1. The cofactor is Zn(2+).

The enzyme catalyses 7-aminomethyl-7-carbaguanine + guanosine(34) in tRNA = 7-aminomethyl-7-carbaguanosine(34) in tRNA + guanine. Its pathway is tRNA modification; tRNA-queuosine biosynthesis. In terms of biological role, catalyzes the base-exchange of a guanine (G) residue with the queuine precursor 7-aminomethyl-7-deazaguanine (PreQ1) at position 34 (anticodon wobble position) in tRNAs with GU(N) anticodons (tRNA-Asp, -Asn, -His and -Tyr). Catalysis occurs through a double-displacement mechanism. The nucleophile active site attacks the C1' of nucleotide 34 to detach the guanine base from the RNA, forming a covalent enzyme-RNA intermediate. The proton acceptor active site deprotonates the incoming PreQ1, allowing a nucleophilic attack on the C1' of the ribose to form the product. After dissociation, two additional enzymatic reactions on the tRNA convert PreQ1 to queuine (Q), resulting in the hypermodified nucleoside queuosine (7-(((4,5-cis-dihydroxy-2-cyclopenten-1-yl)amino)methyl)-7-deazaguanosine). This is Queuine tRNA-ribosyltransferase from Campylobacter jejuni subsp. jejuni serotype O:6 (strain 81116 / NCTC 11828).